A 316-amino-acid polypeptide reads, in one-letter code: Pantothenate kinase (316 aa).

An ATP-binding site is contributed by 95–102; the sequence is GSVAVGKS.

The protein belongs to the prokaryotic pantothenate kinase family.

The protein localises to the cytoplasm. The catalysed reaction is (R)-pantothenate + ATP = (R)-4'-phosphopantothenate + ADP + H(+). It participates in cofactor biosynthesis; coenzyme A biosynthesis; CoA from (R)-pantothenate: step 1/5. The chain is Pantothenate kinase from Shigella sonnei (strain Ss046).